An 882-amino-acid chain; its full sequence is MTNERYNARESEPRWQRQWDDNAIFATQNDDPRPKYYVLEMFPYPSGRIHMGHVRNYTMGDVVARTMRARGYNVLHPMGWDAFGMPAENAAMANKVHPKSWTYANIATMKAQLKSMGLSLDWSREFATCDPSYYKHQQRMFIDFLAAGLVERKQSKVNWDPVDNTVLANEQVIDGRGWRSGALVEQRELTQWFFKISKYSEDLLTALDRLDRWPDKVRIMQRNWIGRSEGLLLRFALDTSTTPNHETEVEVFTTRPDTLFGAKFVALSPDHPLAAEAAKSNPALAAFIEECRKTGTAQAEIDTAEKQGFDTGIRAVHPFDPSWQLPVYVANFVLMDYGTGAIFGCPAHDQRDLDFVNKYGLGNLPVVCPEGQDPATFVVTDIAYDGDGRLINSNNGFIALDGMSIADAKEAVAKRLEAIALGNRPVAQRQVNFRLRDWGISRQRYWGCPIPIIHCEVCGVVPVPIKDLPVKLPDDIEFDRPGNPLDRHPTWKHVACPQCGGKARRETDTMDTFVDSSWYFSRFTDPWNEDAPTTRAVVDRMMPVDQYIGGVEHAILHLLYSRFFTRAMQATGHVGFDEPFRGMFTQGMVVHETYRKLDGTFASPAEIRIVADGDNRLASLLDSGQPVEIGPIEKMSKSKRNTVDPDDIIGSYGADTARWFMLSDSPPDRDVIWSEDGVKGASRFVQRVWRLVSAMAPQLPAPGTRLDAANHPAAQALRVAAHRTLSEILAGIDRLRFNTAVAKLYVYVGELEAVLANAPQGGLGGDPVLAAAAREAIDILVLLIAPMMPHLAEECWAAIGHSGLVSEARWPEIETALLVSDSITLPVQVNGKKRGEVTVARDAQNPQIEAAVLALDAVKQALDGKPVRKIIIVPQRIVNVVG.

A 'HIGH' region motif is present at residues 43-53 (PYPSGRIHMGH). Positions 634–638 (KMSKS) match the 'KMSKS' region motif. Lys-637 is a binding site for ATP.

This sequence belongs to the class-I aminoacyl-tRNA synthetase family.

It localises to the cytoplasm. It carries out the reaction tRNA(Leu) + L-leucine + ATP = L-leucyl-tRNA(Leu) + AMP + diphosphate. This Rhodopseudomonas palustris (strain BisB18) protein is Leucine--tRNA ligase.